A 191-amino-acid polypeptide reads, in one-letter code: Recombination protein RecR (191 aa).

Residues 51-66 (CQTCFHLSADPECEIC) form a C4-type zinc finger. One can recognise a Toprim domain in the interval 74–168 (GVICVVADSR…SVSRIAYGLP (95 aa)).

It belongs to the RecR family.

May play a role in DNA repair. It seems to be involved in an RecBC-independent recombinational process of DNA repair. It may act with RecF and RecO. The polypeptide is Recombination protein RecR (Synechococcus sp. (strain CC9605)).